The primary structure comprises 442 residues: tRNA-2-methylthio-N(6)-dimethylallyladenosine synthase (442 aa).

The region spanning 5–122 (KKVFIKTLGC…LPEMIKQKQK (118 aa)) is the MTTase N-terminal domain. Positions 14, 51, 85, 159, 163, and 166 each coordinate [4Fe-4S] cluster. The region spanning 145-378 (KAEGAKAYVS…DLLNSNAQII (234 aa)) is the Radical SAM core domain. One can recognise a TRAM domain in the interval 380 to 442 (RQMVGTNQRI…LPNSLRGELI (63 aa)).

The protein belongs to the methylthiotransferase family. MiaB subfamily. In terms of assembly, monomer. It depends on [4Fe-4S] cluster as a cofactor.

The protein resides in the cytoplasm. The enzyme catalyses N(6)-dimethylallyladenosine(37) in tRNA + (sulfur carrier)-SH + AH2 + 2 S-adenosyl-L-methionine = 2-methylsulfanyl-N(6)-dimethylallyladenosine(37) in tRNA + (sulfur carrier)-H + 5'-deoxyadenosine + L-methionine + A + S-adenosyl-L-homocysteine + 2 H(+). Functionally, catalyzes the methylthiolation of N6-(dimethylallyl)adenosine (i(6)A), leading to the formation of 2-methylthio-N6-(dimethylallyl)adenosine (ms(2)i(6)A) at position 37 in tRNAs that read codons beginning with uridine. In Francisella tularensis subsp. holarctica (strain FTNF002-00 / FTA), this protein is tRNA-2-methylthio-N(6)-dimethylallyladenosine synthase.